A 341-amino-acid polypeptide reads, in one-letter code: Trace amine-associated receptor 13c (341 aa).

Residues 1-34 (MDLSSQEYDPSQFCFPAVNNSCLKGTHHVSTQTV) lie on the Extracellular side of the membrane. A glycan (N-linked (GlcNAc...) asparagine) is linked at asparagine 19. 2 cysteine pairs are disulfide-bonded: cysteine 22-cysteine 186 and cysteine 105-cysteine 186. The chain crosses the membrane as a helical span at residues 35-55 (VYLILASAMTVTVLGNSVVII). The Cytoplasmic segment spans residues 56–68 (SIAHFKQLQTPTN). Residues 69–89 (ILVMSLALADLLLGLVVMPFS) form a helical membrane-spanning segment. Over 90-105 (MIRSVDGCWYYGETFC) the chain is Extracellular. The chain crosses the membrane as a helical span at residues 106–126 (LLHTGFDLFLTSVSIFHLIFI). The Cytoplasmic segment spans residues 127–147 (AVDRHQAVCFPLQYPTRITIP). The chain crosses the membrane as a helical span at residues 148–168 (VAWVMVMISWSMAAFYSYGVV). At 169-195 (YSKANLEGLEEYIASVYCMGGCTLYFN) the chain is on the extracellular side. The helical transmembrane segment at 196 to 219 (ALWSVLDTLLTFFLPCSVMVGLYA) threads the bilayer. Residues 220-257 (RIFVVAKKHIKSITEANQNENENVFKNPRRSERKAAKT) are Cytoplasmic-facing. The chain crosses the membrane as a helical span at residues 258-278 (LGIVVGAFILCWLPFFINSLV). The Extracellular portion of the chain corresponds to 279–292 (DPYINFSTPYALFD). The N-linked (GlcNAc...) asparagine glycan is linked to asparagine 283. Residues 293–313 (AFGWLGYTNSTLNPIIYGLFY) form a helical membrane-spanning segment. The Cytoplasmic segment spans residues 314 to 341 (PWFRKTLSLIVTLRIFEPNSSDINLFTV).

The protein belongs to the G-protein coupled receptor 1 family. As to expression, expressed in olfactory epithelium (at protein level). Detected in a sparse population of olfactory sensory neurons.

It is found in the cell membrane. Its function is as follows. Olfactory receptor for medium length odd-chained diamines including cadaverine which is generated by bacterial decarboxylation of the basic amino acid lysine and contributes to the odor of decomposing tissue. Mediates pronounced innate aversion behavior to cadaverine. In Danio rerio (Zebrafish), this protein is Trace amine-associated receptor 13c.